We begin with the raw amino-acid sequence, 456 residues long: Heme sensor protein HssS (456 aa).

2 helical membrane-spanning segments follow: residues 9–29 and 164–184; these read IAIY…LFAN and TFLA…VIAS. The HAMP domain occupies 186-238; that stretch reads YSIIKPIKILKQATERLMHGDFNSPIYQSRHDEIGTLQYRFEAMRQSLKQVDD. The region spanning 246-456 is the Histidine kinase domain; that stretch reads NVSHEIKTPL…TFTVTLPETN (211 aa). A Phosphohistidine; by autocatalysis modification is found at His-249.

Autophosphorylated.

Its subcellular location is the cell membrane. It catalyses the reaction ATP + protein L-histidine = ADP + protein N-phospho-L-histidine.. Functionally, member of the two-component regulatory system HssS/HssR involved in intracellular heme homeostasis and tempering of staphylococcal virulence. HssS functions as a heme sensor histidine kinase which is autophosphorylated at a histidine residue and transfers its phosphate group to an aspartate residue of HssR. HssR/HssS activates the expression of hrtAB, an efflux pump, in response to extracellular heme, hemin, hemoglobin or blood. The chain is Heme sensor protein HssS (hssS) from Staphylococcus haemolyticus (strain JCSC1435).